Reading from the N-terminus, the 583-residue chain is Aspartate--tRNA ligase (583 aa).

Glutamate 174 provides a ligand contact to L-aspartate. Positions 198-201 (QITK) are aspartate. Arginine 220 is a binding site for L-aspartate. ATP-binding positions include 220-222 (RDE) and glutamine 229. Histidine 443 serves as a coordination point for L-aspartate. Glutamate 477 is an ATP binding site. L-aspartate is bound at residue arginine 484. 529-532 (GLDR) contacts ATP.

The protein belongs to the class-II aminoacyl-tRNA synthetase family. Type 1 subfamily. In terms of assembly, homodimer.

It localises to the cytoplasm. The enzyme catalyses tRNA(Asp) + L-aspartate + ATP = L-aspartyl-tRNA(Asp) + AMP + diphosphate. Its function is as follows. Catalyzes the attachment of L-aspartate to tRNA(Asp) in a two-step reaction: L-aspartate is first activated by ATP to form Asp-AMP and then transferred to the acceptor end of tRNA(Asp). The chain is Aspartate--tRNA ligase from Streptococcus agalactiae serotype Ia (strain ATCC 27591 / A909 / CDC SS700).